Here is a 483-residue protein sequence, read N- to C-terminus: SET domain and MYND-type zinc finger protein 6 (483 aa).

One can recognise an SET domain in the interval 4–228; sequence PLIASVILPE…KDEQLFISYI (225 aa). Positions 49, 52, 62, 65, 71, 75, 83, and 87 each coordinate Zn(2+). An MYND-type zinc finger spans residues 49 to 87; it reads CSTCTEEKVKTQRCAACKIIHYCSKGCQKADWPFHKLEC.

Belongs to the class V-like SAM-binding methyltransferase superfamily.

Its subcellular location is the cytoplasm. It is found in the nucleus. This Schizosaccharomyces pombe (strain 972 / ATCC 24843) (Fission yeast) protein is SET domain and MYND-type zinc finger protein 6 (set6).